The following is a 1114-amino-acid chain: WD repeat-containing protein 72 (1114 aa).

7 WD repeats span residues 15-54 (APPHSITAIMITDDQQTIVTGSQEGQLCLWSLSPELKISA), 60-102 (GHSA…CVEK), 160-197 (KCMCIVHSVRIQEDSLLVVSITGELKVWDLSSSINSIQ), 327-373 (EENK…SKFD), 413-452 (GMTATITSSEYIPNLDKLICGCEDGTIFITKALNAAKAGL), 470-515 (GHHQ…ILHT), and 566-605 (KHLFPVRMIRWHPVENFLIVGCTDDSVYIWEIETGTLERH). Disordered stretches follow at residues 634–658 (SETHKHKSIEQKSSNSHQPGPVPCP) and 749–798 (SLQT…PPRK). Positions 780 to 796 (KRQKKMKSSKKAHPKPP) are enriched in basic residues. Phosphoserine occurs at positions 1093 and 1095.

In terms of tissue distribution, expressed in maturation stage ameloblasts (at protein level).

It is found in the cytoplasmic vesicle. Functionally, plays a major role in formation of tooth enamel. Specifically required during the maturation phase of amelogenesis for normal formation of the enamel matrix and clearance of enamel proteins. May be involved in localization of the calcium transporter SLC24A4 to the ameloblast cell membrane. In Mus musculus (Mouse), this protein is WD repeat-containing protein 72.